A 434-amino-acid polypeptide reads, in one-letter code: Mothers against decapentaplegic homolog 9 (434 aa).

Residues 16–140 (PAVKRLLGWK…YRRVETPVLP (125 aa)) enclose the MH1 domain. Zn(2+)-binding residues include cysteine 68, cysteine 113, cysteine 125, and histidine 130. Positions 171–222 (MPHNATYPDSFQQSLGPAPPSSPGHVFPQSPCPTSYPQSPGSPSESDSPYQH) are disordered. Residues 202 to 221 (CPTSYPQSPGSPSESDSPYQ) are compositionally biased toward polar residues. The MH2 domain maps to 236-434 (WCSVAYYELN…SPHNPISSVS (199 aa)).

This sequence belongs to the dwarfin/SMAD family. Interaction with the co-SMAD SMAD4. Interacts with PEBP2-alpha subunit. Interacts with RANBP3L. In terms of processing, phosphorylated on serine by BMP (bone morphogenetic proteins) type 1 receptor kinase. Phosphorylated by activin type I receptor-like kinase-2 (ALK-2).

It localises to the cytoplasm. The protein resides in the nucleus. Functionally, transcriptional modulator activated by BMP (bone morphogenetic proteins) type 1 receptor kinase. SMAD9 is a receptor-regulated SMAD (R-SMAD). Has been shown to be activated by activin type I receptor-like kinase-2 (ALK-2) which stimulates heteromerization between SMAD9 and SMAD4. ALK-2 binds TGF-beta, activin and BMP. This Rattus norvegicus (Rat) protein is Mothers against decapentaplegic homolog 9 (Smad9).